A 30-amino-acid polypeptide reads, in one-letter code: Mycofactocin precursor peptide (30 aa).

It belongs to the mycofactocin precursor peptide family. In terms of assembly, interacts with MftB. Post-translationally, the post-translational modifications that lead to mycofactocin involve oxidative decarboxylation of the C-terminal tyrosine residue catalyzed by MftC, introduction of a tyramine-valine cross-link, removal of the modified C-terminal dipeptide by MftE. The released dipeptide then undergoes oxidative deamination by MftD, glycosylation by MftF and methylation by an unknown enzyme.

Functionally, precursor peptide that leads to mycofactocin (MFT) after extensive post-translational modifications by enzymes encoded by adjacent genes. Mycofactocin acts as a redox cofactor of nicotinamide-dependent oxidoreductases encoded in the same locus. This chain is Mycofactocin precursor peptide, found in Mycobacterium ulcerans (strain Agy99).